The following is a 184-amino-acid chain: Large ribosomal subunit protein uL6 (184 aa).

It belongs to the universal ribosomal protein uL6 family. In terms of assembly, part of the 50S ribosomal subunit.

This protein binds to the 23S rRNA, and is important in its secondary structure. It is located near the subunit interface in the base of the L7/L12 stalk, and near the tRNA binding site of the peptidyltransferase center. The chain is Large ribosomal subunit protein uL6 from Fervidobacterium nodosum (strain ATCC 35602 / DSM 5306 / Rt17-B1).